A 328-amino-acid chain; its full sequence is DNA-directed RNA polymerase subunit alpha (328 aa).

Residues 1 to 232 (MHNSLAELIK…QHLAILVDLK (232 aa)) form an alpha N-terminal domain (alpha-NTD) region. The alpha C-terminal domain (alpha-CTD) stretch occupies residues 246–328 (FDPLLLHPVD…PPEGLKKLNQ (83 aa)).

Belongs to the RNA polymerase alpha chain family. Homodimer. The RNAP catalytic core consists of 2 alpha, 1 beta, 1 beta' and 1 omega subunit. When a sigma factor is associated with the core the holoenzyme is formed, which can initiate transcription.

It carries out the reaction RNA(n) + a ribonucleoside 5'-triphosphate = RNA(n+1) + diphosphate. DNA-dependent RNA polymerase catalyzes the transcription of DNA into RNA using the four ribonucleoside triphosphates as substrates. This Methylococcus capsulatus (strain ATCC 33009 / NCIMB 11132 / Bath) protein is DNA-directed RNA polymerase subunit alpha.